The chain runs to 512 residues: Protein spinster homolog 3 (512 aa).

The disordered stretch occupies residues Met-1–Pro-30. 12 consecutive transmembrane segments (helical) span residues Val-50 to Leu-70, Gly-84 to Leu-104, Ala-112 to Ser-132, Ile-145 to Phe-165, Val-173 to Ser-193, Trp-204 to Val-224, Phe-260 to Trp-280, Leu-309 to Ala-329, Leu-343 to Thr-365, Gly-377 to Val-397, Val-411 to Leu-431, and Phe-450 to Tyr-470. Residues Pro-481–Pro-512 form a disordered region.

The protein belongs to the major facilitator superfamily. Spinster (TC 2.A.1.49) family.

Its subcellular location is the membrane. Its function is as follows. Sphingolipid transporter. The chain is Protein spinster homolog 3 (SPNS3) from Homo sapiens (Human).